A 322-amino-acid polypeptide reads, in one-letter code: ATP-dependent 6-phosphofructokinase (322 aa).

Gly11 contacts ATP. ADP is bound at residue 21-25 (RAVTR). Residues 72-73 (RC) and 102-105 (GDGS) each bind ATP. Asp103 serves as a coordination point for Mg(2+). 127 to 129 (TID) is a substrate binding site. Asp129 (proton acceptor) is an active-site residue. Arg156 is an ADP binding site. Residues Arg164 and 171 to 173 (MGR) each bind substrate. Residues 187-189 (GAE), Arg213, and 215-217 (KKH) each bind ADP. Substrate is bound by residues Glu224, Arg245, and 251–254 (HIQR).

It belongs to the phosphofructokinase type A (PFKA) family. ATP-dependent PFK group I subfamily. Prokaryotic clade 'B1' sub-subfamily. In terms of assembly, homotetramer. Mg(2+) serves as cofactor.

It localises to the cytoplasm. The catalysed reaction is beta-D-fructose 6-phosphate + ATP = beta-D-fructose 1,6-bisphosphate + ADP + H(+). The protein operates within carbohydrate degradation; glycolysis; D-glyceraldehyde 3-phosphate and glycerone phosphate from D-glucose: step 3/4. Its activity is regulated as follows. Allosterically activated by ADP and other diphosphonucleosides, and allosterically inhibited by phosphoenolpyruvate. Catalyzes the phosphorylation of D-fructose 6-phosphate to fructose 1,6-bisphosphate by ATP, the first committing step of glycolysis. In Staphylococcus epidermidis (strain ATCC 35984 / DSM 28319 / BCRC 17069 / CCUG 31568 / BM 3577 / RP62A), this protein is ATP-dependent 6-phosphofructokinase.